The following is an 89-amino-acid chain: Large ribosomal subunit protein bL27 (89 aa).

The segment at 1–22 (MAHTKKGGSSRNGRDSESKRLG) is disordered.

This sequence belongs to the bacterial ribosomal protein bL27 family.

This Brucella melitensis biotype 1 (strain ATCC 23456 / CCUG 17765 / NCTC 10094 / 16M) protein is Large ribosomal subunit protein bL27.